Reading from the N-terminus, the 226-residue chain is MAKAGKKYQDACKLVEAGKFYTAAEAMELVKKTATKKFDETIELHVRLGVDPKYADQQVRGAMVLPHGTGKSKRVLVFAKGEKVKEAEAAGADFVGSDEIVQKIQGGWLDFDVAVATPDMMGTVGRLGKVLGPRGLMPNPKLGTVTMDLTKAVSEIKAGKVEYRTDKAGNVHCPIGKASFDAEKLQQNFQALIDTLNRVKPAAAKGQYMRSITVSATMGPGIPVQL.

Belongs to the universal ribosomal protein uL1 family. As to quaternary structure, part of the 50S ribosomal subunit.

Binds directly to 23S rRNA. The L1 stalk is quite mobile in the ribosome, and is involved in E site tRNA release. In terms of biological role, protein L1 is also a translational repressor protein, it controls the translation of the L11 operon by binding to its mRNA. The protein is Large ribosomal subunit protein uL1 of Selenomonas ruminantium.